Here is a 302-residue protein sequence, read N- to C-terminus: Acetaldehyde dehydrogenase 2 (302 aa).

Cys-130 functions as the Acyl-thioester intermediate in the catalytic mechanism. NAD(+) contacts are provided by residues 161–169 and Asn-272; that span reads SVGPGTRRN.

This sequence belongs to the acetaldehyde dehydrogenase family.

It catalyses the reaction acetaldehyde + NAD(+) + CoA = acetyl-CoA + NADH + H(+). This is Acetaldehyde dehydrogenase 2 from Cupriavidus necator (strain ATCC 17699 / DSM 428 / KCTC 22496 / NCIMB 10442 / H16 / Stanier 337) (Ralstonia eutropha).